The chain runs to 349 residues: Hydroxymethylglutaryl-CoA synthase (349 aa).

(3S)-3-hydroxy-3-methylglutaryl-CoA is bound by residues D30 and A31. E82 functions as the Proton donor/acceptor in the catalytic mechanism. (3S)-3-hydroxy-3-methylglutaryl-CoA contacts are provided by C114 and T155. The active-site Acyl-thioester intermediate is the C114. Residue R203 coordinates CoA. Residues T205 and H238 each contribute to the (3S)-3-hydroxy-3-methylglutaryl-CoA site. The Proton donor/acceptor role is filled by H238. Position 243 (K243) interacts with CoA. N270 and S300 together coordinate (3S)-3-hydroxy-3-methylglutaryl-CoA.

The protein belongs to the thiolase-like superfamily. Archaeal HMG-CoA synthase family. As to quaternary structure, interacts with acetoacetyl-CoA thiolase that catalyzes the precedent step in the pathway and with a DUF35 protein. The acetoacetyl-CoA thiolase/HMG-CoA synthase complex channels the intermediate via a fused CoA-binding site, which allows for efficient coupling of the endergonic thiolase reaction with the exergonic HMGCS reaction.

The catalysed reaction is acetoacetyl-CoA + acetyl-CoA + H2O = (3S)-3-hydroxy-3-methylglutaryl-CoA + CoA + H(+). Its pathway is metabolic intermediate biosynthesis; (R)-mevalonate biosynthesis; (R)-mevalonate from acetyl-CoA: step 2/3. Catalyzes the condensation of acetyl-CoA with acetoacetyl-CoA to form 3-hydroxy-3-methylglutaryl-CoA (HMG-CoA). Functions in the mevalonate (MVA) pathway leading to isopentenyl diphosphate (IPP), a key precursor for the biosynthesis of isoprenoid compounds that are building blocks of archaeal membrane lipids. In Methanococcus maripaludis (strain C7 / ATCC BAA-1331), this protein is Hydroxymethylglutaryl-CoA synthase.